The sequence spans 115 residues: Putative septation protein SpoVG (115 aa).

The tract at residues 88-115 is disordered; it reads PGTIATSEVSSQLEESDSDKTLSEDLKA. Polar residues predominate over residues 91-100; the sequence is IATSEVSSQL. Positions 105 to 115 are enriched in basic and acidic residues; it reads SDKTLSEDLKA.

It belongs to the SpoVG family.

In terms of biological role, could be involved in septation. The polypeptide is Putative septation protein SpoVG (Macrococcus caseolyticus (strain JCSC5402) (Macrococcoides caseolyticum)).